Reading from the N-terminus, the 439-residue chain is (p)ppApp synthetase toxin Tas1 (439 aa).

The protein resides in the secreted. It carries out the reaction AMP + ATP = adenosine 3'-diphosphate,5'-phosphate + AMP + H(+). The enzyme catalyses ADP + ATP = adenosine 3'-diphosphate,5'-diphosphate + AMP. It catalyses the reaction 2 ATP = adenosine 3'-diphosphate,5'-triphosphate + AMP. In terms of biological role, type VI secretion exported toxin that pyrophosphorylates adenosine nucleotides to produce (p)ppApp. Thereby, depletes cellular ADP and ATP to dysregulate central metabolism in competitor cells. The chain is (p)ppApp synthetase toxin Tas1 (tas1) from Pseudomonas aeruginosa (strain UCBPP-PA14).